We begin with the raw amino-acid sequence, 132 residues long: Small ribosomal subunit protein uS8 (132 aa).

It belongs to the universal ribosomal protein uS8 family. As to quaternary structure, part of the 30S ribosomal subunit. Contacts proteins S5 and S12.

One of the primary rRNA binding proteins, it binds directly to 16S rRNA central domain where it helps coordinate assembly of the platform of the 30S subunit. The polypeptide is Small ribosomal subunit protein uS8 (Ehrlichia ruminantium (strain Welgevonden)).